The chain runs to 173 residues: Photosystem I assembly protein Ycf3 (173 aa).

3 TPR repeats span residues 35 to 68 (AFAYYRDGMSAQADGEYAEALENYQAALELEEDP), 72 to 105 (SYILYNIGLIHASNGEHEKALEYYHQALELNPRM), and 113 to 146 (AVIYHYLGTQAEEQQRLEEAEQFFDRAADYWKRA).

Belongs to the Ycf3 family.

It is found in the cellular thylakoid membrane. Essential for the assembly of the photosystem I (PSI) complex. May act as a chaperone-like factor to guide the assembly of the PSI subunits. This is Photosystem I assembly protein Ycf3 from Thermosynechococcus vestitus (strain NIES-2133 / IAM M-273 / BP-1).